A 65-amino-acid polypeptide reads, in one-letter code: Weak neurotoxin 8 (65 aa).

Cystine bridges form between Cys-3–Cys-24, Cys-6–Cys-11, Cys-17–Cys-42, Cys-46–Cys-57, and Cys-58–Cys-63.

It belongs to the three-finger toxin family. Ancestral subfamily. Orphan group II sub-subfamily. In terms of tissue distribution, expressed by the venom gland.

It localises to the secreted. Its function is as follows. Binds with low affinity to muscular (alpha-1-beta-1-delta-epsilon/CHRNA1-CHRNB1-CHRND-CHRNE) and very low affinity to neuronal (alpha-7/CHRNA7) nicotinic acetylcholine receptor (nAChR). The protein is Weak neurotoxin 8 of Naja naja (Indian cobra).